A 666-amino-acid chain; its full sequence is Putative cysteine-rich receptor-like protein kinase 20 (666 aa).

The N-terminal stretch at methionine 1–alanine 23 is a signal peptide. Residues glutamine 24 to serine 264 lie on the Extracellular side of the membrane. Gnk2-homologous domains lie at phenylalanine 27–isoleucine 131 and threonine 137–phenylalanine 241. Residues asparagine 32, asparagine 42, asparagine 60, asparagine 69, and asparagine 103 are each glycosylated (N-linked (GlcNAc...) asparagine). A glycan (N-linked (GlcNAc...) asparagine) is linked at asparagine 262. Residues valine 265 to phenylalanine 285 form a helical membrane-spanning segment. The Cytoplasmic segment spans residues serine 286–arginine 666. Positions phenylalanine 344–leucine 623 constitute a Protein kinase domain. ATP is bound by residues leucine 350–valine 358 and lysine 372. Position 417 is a phosphotyrosine (tyrosine 417). Aspartate 469 serves as the catalytic Proton acceptor. At threonine 509 the chain carries Phosphothreonine. Phosphotyrosine is present on tyrosine 517.

This sequence belongs to the protein kinase superfamily. Ser/Thr protein kinase family. CRK subfamily.

The protein localises to the membrane. It catalyses the reaction L-seryl-[protein] + ATP = O-phospho-L-seryl-[protein] + ADP + H(+). The enzyme catalyses L-threonyl-[protein] + ATP = O-phospho-L-threonyl-[protein] + ADP + H(+). The chain is Putative cysteine-rich receptor-like protein kinase 20 (CRK20) from Arabidopsis thaliana (Mouse-ear cress).